A 424-amino-acid polypeptide reads, in one-letter code: Dual-specificity RNA methyltransferase RlmN (424 aa).

The active-site Proton acceptor is glutamate 132. In terms of domain architecture, Radical SAM core spans 138–388; the sequence is GPDRGTLCVS…VRTPRGRDIL (251 aa). Cysteine 145 and cysteine 391 form a disulfide bridge. [4Fe-4S] cluster contacts are provided by cysteine 152, cysteine 156, and cysteine 159. S-adenosyl-L-methionine is bound by residues 217-218, serine 249, 271-273, and asparagine 348; these read GE and SLH. Cysteine 391 acts as the S-methylcysteine intermediate in catalysis.

Belongs to the radical SAM superfamily. RlmN family. [4Fe-4S] cluster is required as a cofactor.

It is found in the cytoplasm. The catalysed reaction is adenosine(2503) in 23S rRNA + 2 reduced [2Fe-2S]-[ferredoxin] + 2 S-adenosyl-L-methionine = 2-methyladenosine(2503) in 23S rRNA + 5'-deoxyadenosine + L-methionine + 2 oxidized [2Fe-2S]-[ferredoxin] + S-adenosyl-L-homocysteine. It carries out the reaction adenosine(37) in tRNA + 2 reduced [2Fe-2S]-[ferredoxin] + 2 S-adenosyl-L-methionine = 2-methyladenosine(37) in tRNA + 5'-deoxyadenosine + L-methionine + 2 oxidized [2Fe-2S]-[ferredoxin] + S-adenosyl-L-homocysteine. In terms of biological role, specifically methylates position 2 of adenine 2503 in 23S rRNA and position 2 of adenine 37 in tRNAs. m2A2503 modification seems to play a crucial role in the proofreading step occurring at the peptidyl transferase center and thus would serve to optimize ribosomal fidelity. This is Dual-specificity RNA methyltransferase RlmN from Methylobacterium radiotolerans (strain ATCC 27329 / DSM 1819 / JCM 2831 / NBRC 15690 / NCIMB 10815 / 0-1).